The chain runs to 186 residues: Large ribosomal subunit protein bL17 (186 aa).

Residues 123–186 form a disordered region; sequence SEADRARRVK…ADEAEGSSED (64 aa). Residues 139–177 show a composition bias toward low complexity; sequence EAAAAAPQAAVEPEAVEAAPAPDAPEAAPEAEAAAPQPA.

Belongs to the bacterial ribosomal protein bL17 family. Part of the 50S ribosomal subunit. Contacts protein L32.

This chain is Large ribosomal subunit protein bL17, found in Mycobacterium avium (strain 104).